Reading from the N-terminus, the 378-residue chain is Chaperone protein DnaJ 1 (378 aa).

Residues 4-68 (DYYGILGVDR…DKRRIVDMGG (65 aa)) enclose the J domain. A CR-type zinc finger spans residues 129-211 (GVKKDLTLDT…CAGDGRVRAR (83 aa)). The Zn(2+) site is built by C142, C145, C159, C162, C185, C188, C199, and C202. CXXCXGXG motif repeat units follow at residues 142–149 (CSKCHGSG), 159–166 (CGTCHGSG), 185–192 (CHTCNGTG), and 199–206 (CDECAGDG).

The protein belongs to the DnaJ family. Homodimer. Requires Zn(2+) as cofactor.

The protein resides in the cytoplasm. Participates actively in the response to hyperosmotic and heat shock by preventing the aggregation of stress-denatured proteins and by disaggregating proteins, also in an autonomous, DnaK-independent fashion. Unfolded proteins bind initially to DnaJ; upon interaction with the DnaJ-bound protein, DnaK hydrolyzes its bound ATP, resulting in the formation of a stable complex. GrpE releases ADP from DnaK; ATP binding to DnaK triggers the release of the substrate protein, thus completing the reaction cycle. Several rounds of ATP-dependent interactions between DnaJ, DnaK and GrpE are required for fully efficient folding. Also involved, together with DnaK and GrpE, in the DNA replication of plasmids through activation of initiation proteins. The protein is Chaperone protein DnaJ 1 of Corynebacterium efficiens (strain DSM 44549 / YS-314 / AJ 12310 / JCM 11189 / NBRC 100395).